The chain runs to 571 residues: MGNSPSYNPPAGISPSDWLNLLQSAQRLNPRPSPSDFTDLKNYIHWFHKTQKKPWTFTSGGPTSCPPGRFGRVPLVLATLNEVLSNEGGAPGASAPEEQPPPYDPPAILPIISEGNRNRHRAWALRELQDIKKEIENKAPGSQVWIQTLRLAILQADPTPADLEQLCQYIASPVDQTAHMTSLTAAIAAAEAANTLQGFNPKTGTLTQQSAQPNAGDLRSQYQNLWLQAGKNLPTRPSAPWSTIVQGPAESSVEFVNRLQISLADNLPDGVPKEPIIDSLSYANANRECQQILQGRGPVAAVGQKLQACAQWAPKNKQPALLVHTPGPKMPGPRQPAPKRPPPGPCYRCLKEGHWARDCPTKATGPPPGPCPICKDPSHWKRDCPTLKSKNKLIEGGLSAPQTITPITDSLSEAELECLLSIPLARSRPSVAVYLSGPWLQPSQNQALMLVDTGAENTVLPQNWLVRDYPRIPAAVLGAGGVSRNRYNWLQGPLTLALKPEGPFITIPKILVDTSDKWQILGRDVPSRLQASISIPEEVRPPVVGVLDTPPSHIGLEHLPPPPEVPQFPLN.

Residue Gly2 is the site of N-myristoyl glycine; by host attachment. Residues 100-103 (PPPY) carry the PPXY motif motif. 2 repeats span residues 342–362 (PPGPCYRCLKEGHWARDCPTK) and 367–387 (PPGPCPICKDPSHWKRDCPTL). 2 consecutive CCHC-type zinc fingers follow at residues 345–362 (PCYRCLKEGHWARDCPTK) and 370–387 (PCPICKDPSHWKRDCPTL). Thr453 (protease; shared with dimeric partner) is an active-site residue.

As to quaternary structure, homodimer; the homodimers are part of the immature particles. Interacts with human TSG101 and NEDD4; these interactions are essential for budding and release of viral particles. Homodimer; further assembles as homohexamers. Specific enzymatic cleavages by the viral protease yield mature proteins. The polyprotein is cleaved during and after budding, this process is termed maturation. The protease is autoproteolytically processed at its N- and C-termini. In terms of processing, myristoylated. Myristoylation of the matrix (MA) domain mediates the transport and binding of Gag polyproteins to the host plasma membrane and is required for the assembly of viral particles.

Its subcellular location is the virion. Its function is as follows. The matrix domain targets Gag, Gag-Pro and Gag-Pro-Pol polyproteins to the plasma membrane via a multipartite membrane binding signal, that includes its myristoylated N-terminus. Functionally, matrix protein. In terms of biological role, forms the spherical core of the virus that encapsulates the genomic RNA-nucleocapsid complex. Binds strongly to viral nucleic acids and promote their aggregation. Also destabilizes the nucleic acids duplexes via highly structured zinc-binding motifs. Its function is as follows. The aspartyl protease mediates proteolytic cleavages of Gag and Gag-Pol polyproteins during or shortly after the release of the virion from the plasma membrane. Cleavages take place as an ordered, step-wise cascade to yield mature proteins. This process is called maturation. Displays maximal activity during the budding process just prior to particle release from the cell. In Bovine leukemia virus (isolate Japanese BLV-1) (BLV), this protein is Gag-Pro polyprotein.